Reading from the N-terminus, the 363-residue chain is Histidine biosynthesis bifunctional protein HisB (363 aa).

Residues 1–174 (MTQPTLFIDR…AVTNIGDRQP (174 aa)) are histidinol-phosphatase. The active-site Nucleophile is the aspartate 9. 2 residues coordinate Mg(2+): aspartate 9 and aspartate 11. Residue aspartate 11 is the Proton donor of the active site. 4 residues coordinate Zn(2+): cysteine 92, histidine 94, cysteine 100, and cysteine 102. Aspartate 129 serves as a coordination point for Mg(2+). Residues 175 to 363 (RYAEVVRKTK…NELPSSKGVL (189 aa)) are imidazoleglycerol-phosphate dehydratase.

In the N-terminal section; belongs to the histidinol-phosphatase family. This sequence in the C-terminal section; belongs to the imidazoleglycerol-phosphate dehydratase family. The cofactor is Mg(2+). Requires Zn(2+) as cofactor.

Its subcellular location is the cytoplasm. The enzyme catalyses D-erythro-1-(imidazol-4-yl)glycerol 3-phosphate = 3-(imidazol-4-yl)-2-oxopropyl phosphate + H2O. The catalysed reaction is L-histidinol phosphate + H2O = L-histidinol + phosphate. The protein operates within amino-acid biosynthesis; L-histidine biosynthesis; L-histidine from 5-phospho-alpha-D-ribose 1-diphosphate: step 6/9. It functions in the pathway amino-acid biosynthesis; L-histidine biosynthesis; L-histidine from 5-phospho-alpha-D-ribose 1-diphosphate: step 8/9. The polypeptide is Histidine biosynthesis bifunctional protein HisB (Actinobacillus pleuropneumoniae serotype 5b (strain L20)).